We begin with the raw amino-acid sequence, 276 residues long: Bis(5'-nucleosyl)-tetraphosphatase, symmetrical (276 aa).

Belongs to the Ap4A hydrolase family.

The enzyme catalyses P(1),P(4)-bis(5'-adenosyl) tetraphosphate + H2O = 2 ADP + 2 H(+). Its function is as follows. Hydrolyzes diadenosine 5',5'''-P1,P4-tetraphosphate to yield ADP. In Tolumonas auensis (strain DSM 9187 / NBRC 110442 / TA 4), this protein is Bis(5'-nucleosyl)-tetraphosphatase, symmetrical.